The sequence spans 176 residues: ATP-dependent protease subunit HslV (176 aa).

Thr-2 is a catalytic residue. 3 residues coordinate Na(+): Gly-157, Cys-160, and Thr-163.

It belongs to the peptidase T1B family. HslV subfamily. As to quaternary structure, a double ring-shaped homohexamer of HslV is capped on each side by a ring-shaped HslU homohexamer. The assembly of the HslU/HslV complex is dependent on binding of ATP.

The protein resides in the cytoplasm. It carries out the reaction ATP-dependent cleavage of peptide bonds with broad specificity.. With respect to regulation, allosterically activated by HslU binding. Functionally, protease subunit of a proteasome-like degradation complex believed to be a general protein degrading machinery. This is ATP-dependent protease subunit HslV from Enterobacter sp. (strain 638).